Consider the following 399-residue polypeptide: Succinate--CoA ligase [ADP-forming] subunit beta (399 aa).

The region spanning 9 to 254 (KAVLAEFGVA…ESEEDPKEIE (246 aa)) is the ATP-grasp domain. Residues K46, 53 to 55 (GRG), E109, A112, and E117 contribute to the ATP site. Mg(2+) is bound by residues N209 and D223. Residues N274 and 331–333 (GIM) contribute to the substrate site.

It belongs to the succinate/malate CoA ligase beta subunit family. Heterotetramer of two alpha and two beta subunits. Mg(2+) is required as a cofactor.

It catalyses the reaction succinate + ATP + CoA = succinyl-CoA + ADP + phosphate. The catalysed reaction is GTP + succinate + CoA = succinyl-CoA + GDP + phosphate. It functions in the pathway carbohydrate metabolism; tricarboxylic acid cycle; succinate from succinyl-CoA (ligase route): step 1/1. Its function is as follows. Succinyl-CoA synthetase functions in the citric acid cycle (TCA), coupling the hydrolysis of succinyl-CoA to the synthesis of either ATP or GTP and thus represents the only step of substrate-level phosphorylation in the TCA. The beta subunit provides nucleotide specificity of the enzyme and binds the substrate succinate, while the binding sites for coenzyme A and phosphate are found in the alpha subunit. This is Succinate--CoA ligase [ADP-forming] subunit beta from Phenylobacterium zucineum (strain HLK1).